A 463-amino-acid polypeptide reads, in one-letter code: L-seryl-tRNA(Sec) selenium transferase (463 aa).

N6-(pyridoxal phosphate)lysine is present on Lys-295.

It belongs to the SelA family. As to quaternary structure, homodecamer; pentamer of dimers. Binds only one seryl-tRNA(Sec) per dimer. The cofactor is pyridoxal 5'-phosphate.

The protein resides in the cytoplasm. The catalysed reaction is L-seryl-tRNA(Sec) + selenophosphate + H(+) = L-selenocysteinyl-tRNA(Sec) + phosphate. It functions in the pathway aminoacyl-tRNA biosynthesis; selenocysteinyl-tRNA(Sec) biosynthesis; selenocysteinyl-tRNA(Sec) from L-seryl-tRNA(Sec) (bacterial route): step 1/1. Converts seryl-tRNA(Sec) to selenocysteinyl-tRNA(Sec) required for selenoprotein biosynthesis. The sequence is that of L-seryl-tRNA(Sec) selenium transferase from Escherichia coli O127:H6 (strain E2348/69 / EPEC).